The sequence spans 288 residues: Acyl-CoA-binding domain-containing protein 6 homolog (288 aa).

Residues 6-94 form the ACB domain; that stretch reads IENKFKLAVD…VNALSPGWDS (89 aa). An acyl-CoA contacts are provided by residues 36–40, lysine 62, and tyrosine 81; that span reads YCNYK. 2 ANK repeats span residues 200–229 and 233–263; these read DGRTALIWACDRGYFEIAKLLIENGSNVNV and EGMTPLHYAVVCDQFEICKLLLSQSSIDKSI.

Its subcellular location is the cytoplasm. In terms of biological role, binds long-chain acyl-coenzyme A molecules with a strong preference for unsaturated C18:1-CoA. Does not bind fatty acids. Plays a role in protein N-myristoylation. This is Acyl-CoA-binding domain-containing protein 6 homolog (acbd6) from Dictyostelium discoideum (Social amoeba).